Consider the following 269-residue polypeptide: Undecaprenyl-diphosphatase (269 aa).

A run of 6 helical transmembrane segments spans residues 43-63, 82-102, 108-128, 188-208, 222-242, and 249-269; these read KGKV…CWEY, FILN…LLHG, LFSS…ILLV, ATEF…FYDV, MFAV…KTLI, and DFKG…AYYW.

The protein belongs to the UppP family.

The protein resides in the cell inner membrane. The enzyme catalyses di-trans,octa-cis-undecaprenyl diphosphate + H2O = di-trans,octa-cis-undecaprenyl phosphate + phosphate + H(+). Functionally, catalyzes the dephosphorylation of undecaprenyl diphosphate (UPP). Confers resistance to bacitracin. The chain is Undecaprenyl-diphosphatase from Methylobacillus flagellatus (strain ATCC 51484 / DSM 6875 / VKM B-1610 / KT).